The following is a 76-amino-acid chain: Kappa-actitoxin-Avd4c (76 aa).

The first 19 residues, 1-19 (MNKALFLCLVVLCAAVVFA), serve as a signal peptide directing secretion. The propeptide occupies 20 to 31 (AEDLQKAKHAPF). 3 disulfide bridges follow: cysteine 37-cysteine 72, cysteine 39-cysteine 65, and cysteine 55-cysteine 73.

The protein belongs to the sea anemone type 3 (BDS) potassium channel toxin family. In terms of tissue distribution, moderately expressed in the ectodermal tissue from the distal and proximal tentacles, body wall, and oral disk.

Its subcellular location is the secreted. The protein localises to the nematocyst. In terms of biological role, blocks Kv3 voltage-gated potassium channels. Reduces blood pressure. In Anemonia viridis (Snakelocks anemone), this protein is Kappa-actitoxin-Avd4c.